The following is a 1254-amino-acid chain: Zinc finger protein BRUTUS-like At1g18910 (1254 aa).

Residues 1–30 (MGVGDPLPLPPEKNRREVNKPPDIASTSSS) are disordered. Residues 454 to 474 (IHFLPLGLLKCVIMWFSAQLP) traverse the membrane as a helical segment. The CHY-type zinc-finger motif lies at 1013-1082 (PHKLIFGCKH…ASCSNISCSS (70 aa)). Positions 1020, 1022, 1033, 1034, 1040, 1043, 1044, 1050, 1062, 1065, 1075, 1080, 1089, 1092, 1103, 1104, 1107, 1110, 1122, 1123, 1126, 1129, 1137, and 1139 each coordinate Zn(2+). Residues 1084–1147 (MGKYYCKICK…VCREKCLEDN (64 aa)) form a CTCHY-type zinc finger. The segment at 1148–1190 (CPICHEYIFTSNSPVKALPCGHVMHSTCFQEYTCSHYTCPICS) adopts an RING-type; atypical zinc-finger fold.

As to quaternary structure, binds zinc and iron ions.

The protein resides in the membrane. It is found in the nucleus. Its pathway is protein modification; protein ubiquitination. Functionally, probable E3 ubiquitin-protein ligase that may regulate the response to iron deficiency and thus contributes to iron homeostasis. The protein is Zinc finger protein BRUTUS-like At1g18910 of Arabidopsis thaliana (Mouse-ear cress).